We begin with the raw amino-acid sequence, 271 residues long: DNA repair protein RecO (271 aa).

Belongs to the RecO family.

In terms of biological role, involved in DNA repair and RecF pathway recombination. The sequence is that of DNA repair protein RecO from Rhodococcus erythropolis (strain PR4 / NBRC 100887).